Here is a 274-residue protein sequence, read N- to C-terminus: 2,3,4,5-tetrahydropyridine-2,6-dicarboxylate N-succinyltransferase (274 aa).

Substrate contacts are provided by R104 and D141.

The protein belongs to the transferase hexapeptide repeat family. Homotrimer.

Its subcellular location is the cytoplasm. It carries out the reaction (S)-2,3,4,5-tetrahydrodipicolinate + succinyl-CoA + H2O = (S)-2-succinylamino-6-oxoheptanedioate + CoA. The protein operates within amino-acid biosynthesis; L-lysine biosynthesis via DAP pathway; LL-2,6-diaminopimelate from (S)-tetrahydrodipicolinate (succinylase route): step 1/3. This is 2,3,4,5-tetrahydropyridine-2,6-dicarboxylate N-succinyltransferase from Photorhabdus laumondii subsp. laumondii (strain DSM 15139 / CIP 105565 / TT01) (Photorhabdus luminescens subsp. laumondii).